The following is a 241-amino-acid chain: Ribosomal RNA small subunit methyltransferase G (241 aa).

Residues glycine 79, phenylalanine 84, alanine 130–glutamate 131, and arginine 150 each bind S-adenosyl-L-methionine.

Belongs to the methyltransferase superfamily. RNA methyltransferase RsmG family.

It localises to the cytoplasm. Functionally, specifically methylates the N7 position of a guanine in 16S rRNA. The polypeptide is Ribosomal RNA small subunit methyltransferase G (Ligilactobacillus salivarius (strain UCC118) (Lactobacillus salivarius)).